The following is a 590-amino-acid chain: uncharacterized protein (590 aa).

Disordered stretches follow at residues 306–329 (IAEPQTHTGGADRQRPQRPDGIPY) and 528–590 (QPAP…LMNL). Over residues 543–563 (PSLPQPVPEPLAPQEPPPPGT) the composition is skewed to pro residues.

This is an uncharacterized protein from Ictaluridae (bullhead catfishes).